A 188-amino-acid chain; its full sequence is Crossover junction endodeoxyribonuclease RuvC (188 aa).

Active-site residues include Asp7, Glu68, and Asp141. Mg(2+) is bound by residues Asp7, Glu68, and Asp141.

The protein belongs to the RuvC family. In terms of assembly, homodimer which binds Holliday junction (HJ) DNA. The HJ becomes 2-fold symmetrical on binding to RuvC with unstacked arms; it has a different conformation from HJ DNA in complex with RuvA. In the full resolvosome a probable DNA-RuvA(4)-RuvB(12)-RuvC(2) complex forms which resolves the HJ. Mg(2+) is required as a cofactor.

The protein resides in the cytoplasm. It catalyses the reaction Endonucleolytic cleavage at a junction such as a reciprocal single-stranded crossover between two homologous DNA duplexes (Holliday junction).. Its function is as follows. The RuvA-RuvB-RuvC complex processes Holliday junction (HJ) DNA during genetic recombination and DNA repair. Endonuclease that resolves HJ intermediates. Cleaves cruciform DNA by making single-stranded nicks across the HJ at symmetrical positions within the homologous arms, yielding a 5'-phosphate and a 3'-hydroxyl group; requires a central core of homology in the junction. The consensus cleavage sequence is 5'-(A/T)TT(C/G)-3'. Cleavage occurs on the 3'-side of the TT dinucleotide at the point of strand exchange. HJ branch migration catalyzed by RuvA-RuvB allows RuvC to scan DNA until it finds its consensus sequence, where it cleaves and resolves the cruciform DNA. The chain is Crossover junction endodeoxyribonuclease RuvC from Mycobacterium leprae (strain TN).